Here is a 288-residue protein sequence, read N- to C-terminus: Geranylgeranyl diphosphate synthase (288 aa).

Residues arginine 43 and histidine 73 each coordinate isopentenyl diphosphate. Positions 80 and 86 each coordinate Mg(2+). Arginine 91 contacts (2E,6E)-farnesyl diphosphate. Arginine 92 contributes to the isopentenyl diphosphate binding site. (2E,6E)-farnesyl diphosphate-binding residues include lysine 170, threonine 171, and glutamine 205.

Belongs to the FPP/GGPP synthase family. Mg(2+) is required as a cofactor.

The enzyme catalyses isopentenyl diphosphate + (2E,6E)-farnesyl diphosphate = (2E,6E,10E)-geranylgeranyl diphosphate + diphosphate. Its pathway is isoprenoid biosynthesis; geranylgeranyl diphosphate biosynthesis; geranylgeranyl diphosphate from farnesyl diphosphate and isopentenyl diphosphate: step 1/1. Its function is as follows. Catalyzes the condensation of farnesyl diphosphate (FPP) and isopentenyl diphosphate (IPP) to yield geranylgeranyl diphosphate (GGPP) needed for biosynthesis of carotenoids and diterpenes. The sequence is that of Geranylgeranyl diphosphate synthase (crtE) from Cereibacter sphaeroides (strain ATCC 17023 / DSM 158 / JCM 6121 / CCUG 31486 / LMG 2827 / NBRC 12203 / NCIMB 8253 / ATH 2.4.1.) (Rhodobacter sphaeroides).